The sequence spans 544 residues: GMP synthase [glutamine-hydrolyzing] (544 aa).

Residues T12–G210 enclose the Glutamine amidotransferase type-1 domain. Residue C88 is the Nucleophile of the active site. Catalysis depends on residues H184 and E186. In terms of domain architecture, GMPS ATP-PPase spans W211–R419. Residue S239 to T245 participates in ATP binding. Residues R312, D481, K536, and E542 each coordinate XMP.

In terms of assembly, homodimer. Also forms a small population of homotetramers. The cofactor is Mg(2+).

It is found in the cytoplasm. The protein resides in the cytosol. The catalysed reaction is XMP + L-glutamine + ATP + H2O = GMP + L-glutamate + AMP + diphosphate + 2 H(+). Its pathway is purine metabolism; GMP biosynthesis; GMP from XMP (L-Gln route): step 1/1. With respect to regulation, the enzyme is inhibited by ECC1385; although this compound fails to inhibit growth of the organism. In terms of biological role, catalyzes the conversion of xanthine monophosphate (XMP) to GMP in the presence of glutamine and ATP through an adenyl-XMP intermediate. This chain is GMP synthase [glutamine-hydrolyzing], found in Cryptococcus neoformans var. grubii serotype A (strain H99 / ATCC 208821 / CBS 10515 / FGSC 9487) (Filobasidiella neoformans var. grubii).